Here is a 264-residue protein sequence, read N- to C-terminus: Neurexophilin-2 (264 aa).

A signal peptide spans 1–22 (MRLRPLPLVVVPGLLQLLFCDS). The II stretch occupies residues 23-90 (KEVVHATEGL…WDWLANITEI (68 aa)). 4 N-linked (GlcNAc...) asparagine glycosylation sites follow: N86, N139, N149, and N155. The tract at residues 91–169 (QEPLARTKRR…LVPPSKVVEF (79 aa)) is III. Residues 170–178 (EVSPQSTLE) are IV (linker domain). The v (Cys-rich) stretch occupies residues 179-264 (TKESKSFNCR…HSETPYLSSG (86 aa)).

Belongs to the neurexophilin family. Post-translationally, may be proteolytically processed at the boundary between the N-terminal non-conserved and the central conserved domain in neuron-like cells. In terms of tissue distribution, expressed in brain and kidney.

The protein localises to the secreted. Its function is as follows. May be signaling molecules that resemble neuropeptides and that act by binding to alpha-neurexins and possibly other receptors. This is Neurexophilin-2 (NXPH2) from Homo sapiens (Human).